The sequence spans 927 residues: DIS3-like exonuclease 2 (927 aa).

Residues 1–12 show a composition bias toward basic residues; the sequence is MDLKPNIRRKEK. The segment at 1–168 is disordered; it reads MDLKPNIRRK…DTNNATEMVS (168 aa). The span at 13 to 31 shows a compositional bias: basic and acidic residues; that stretch reads RNLLKGEAALEKKGSIDRK. A compositionally biased stretch (basic residues) spans 97-106; it reads VKPKAKKKNS. Residues 107-152 show a composition bias toward basic and acidic residues; the sequence is KEKISKSSKQDEHKTDVHKESVSKLSKNLESRNNRDENSAKREKNN. The span at 153–168 shows a compositional bias: polar residues; the sequence is SHQVEADTNNATEMVS. D453 and D462 together coordinate Mg(2+).

This sequence belongs to the RNR ribonuclease family. DIS3L2 subfamily. Requires Mg(2+) as cofactor. Mn(2+) is required as a cofactor.

The protein localises to the cytoplasm. Its subcellular location is the P-body. 3'-5'-exoribonuclease that specifically recognizes RNAs polyuridylated at their 3' end and mediates their degradation. Component of an exosome-independent RNA degradation pathway that mediates degradation of cytoplasmic mRNAs that have been deadenylated and subsequently uridylated at their 3'. The sequence is that of DIS3-like exonuclease 2 (dis32) from Schizosaccharomyces pombe (strain 972 / ATCC 24843) (Fission yeast).